The following is a 95-amino-acid chain: Co-chaperonin GroES (95 aa).

This sequence belongs to the GroES chaperonin family. Heptamer of 7 subunits arranged in a ring. Interacts with the chaperonin GroEL.

The protein resides in the cytoplasm. Together with the chaperonin GroEL, plays an essential role in assisting protein folding. The GroEL-GroES system forms a nano-cage that allows encapsulation of the non-native substrate proteins and provides a physical environment optimized to promote and accelerate protein folding. GroES binds to the apical surface of the GroEL ring, thereby capping the opening of the GroEL channel. The polypeptide is Co-chaperonin GroES (Beijerinckia indica subsp. indica (strain ATCC 9039 / DSM 1715 / NCIMB 8712)).